The chain runs to 333 residues: Holliday junction branch migration complex subunit RuvB (333 aa).

The tract at residues 1–182 (MDERLLSGES…FGVLSRLEYY (182 aa)) is large ATPase domain (RuvB-L). ATP-binding positions include Leu-21, Arg-22, Gly-63, Lys-66, Thr-67, Thr-68, 129 to 131 (EDF), Arg-172, Tyr-182, and Arg-219. Thr-67 lines the Mg(2+) pocket. A small ATPAse domain (RuvB-S) region spans residues 183–253 (TVDQLSAIVE…ITQMALELLQ (71 aa)). The tract at residues 256–333 (KLGLDHIDHK…EHFGMEMPKV (78 aa)) is head domain (RuvB-H). DNA is bound by residues Arg-311 and Arg-316.

Belongs to the RuvB family. Homohexamer. Forms an RuvA(8)-RuvB(12)-Holliday junction (HJ) complex. HJ DNA is sandwiched between 2 RuvA tetramers; dsDNA enters through RuvA and exits via RuvB. An RuvB hexamer assembles on each DNA strand where it exits the tetramer. Each RuvB hexamer is contacted by two RuvA subunits (via domain III) on 2 adjacent RuvB subunits; this complex drives branch migration. In the full resolvosome a probable DNA-RuvA(4)-RuvB(12)-RuvC(2) complex forms which resolves the HJ.

The protein resides in the cytoplasm. It carries out the reaction ATP + H2O = ADP + phosphate + H(+). Functionally, the RuvA-RuvB-RuvC complex processes Holliday junction (HJ) DNA during genetic recombination and DNA repair, while the RuvA-RuvB complex plays an important role in the rescue of blocked DNA replication forks via replication fork reversal (RFR). RuvA specifically binds to HJ cruciform DNA, conferring on it an open structure. The RuvB hexamer acts as an ATP-dependent pump, pulling dsDNA into and through the RuvAB complex. RuvB forms 2 homohexamers on either side of HJ DNA bound by 1 or 2 RuvA tetramers; 4 subunits per hexamer contact DNA at a time. Coordinated motions by a converter formed by DNA-disengaged RuvB subunits stimulates ATP hydrolysis and nucleotide exchange. Immobilization of the converter enables RuvB to convert the ATP-contained energy into a lever motion, pulling 2 nucleotides of DNA out of the RuvA tetramer per ATP hydrolyzed, thus driving DNA branch migration. The RuvB motors rotate together with the DNA substrate, which together with the progressing nucleotide cycle form the mechanistic basis for DNA recombination by continuous HJ branch migration. Branch migration allows RuvC to scan DNA until it finds its consensus sequence, where it cleaves and resolves cruciform DNA. In Bacillus cereus (strain 03BB102), this protein is Holliday junction branch migration complex subunit RuvB.